The chain runs to 355 residues: Protein RecA (355 aa).

65–72 (GPESSGKT) provides a ligand contact to ATP.

Belongs to the RecA family.

It localises to the cytoplasm. In terms of biological role, can catalyze the hydrolysis of ATP in the presence of single-stranded DNA, the ATP-dependent uptake of single-stranded DNA by duplex DNA, and the ATP-dependent hybridization of homologous single-stranded DNAs. It interacts with LexA causing its activation and leading to its autocatalytic cleavage. The chain is Protein RecA from Pseudomonas putida (strain GB-1).